The following is a 553-amino-acid chain: Peroxiredoxin-2A (553 aa).

The region spanning 4-160 (IDVGDFVPDG…LMKMTTTTMS (157 aa)) is the Thioredoxin domain. Residue cysteine 51 is the Cysteine sulfenic acid (-SOH) intermediate of the active site. The 46-residue stretch at 156 to 201 (TTTMSNLPTDLLEEIISRVPRKYMRAVRLTCKRWNGMFKSQSFTKM) folds into the F-box domain.

It belongs to the peroxiredoxin family. Prx5 subfamily. Monomer.

The catalysed reaction is [glutaredoxin]-dithiol + a hydroperoxide = [glutaredoxin]-disulfide + an alcohol + H2O. Thiol-specific peroxidase that catalyzes the reduction of hydrogen peroxide and organic hydroperoxides to water and alcohols, respectively. Plays a role in cell protection against oxidative stress by detoxifying peroxides. May be involved in intracellular redox signaling. The protein is Peroxiredoxin-2A (PRXIIA) of Arabidopsis thaliana (Mouse-ear cress).